The following is an 898-amino-acid chain: Serine/threonine-protein kinase TAO3 (898 aa).

One can recognise a Protein kinase domain in the interval 24–277; the sequence is FIDLHEIGHG…AVELLRHDFI (254 aa). Residues 30-38 and Lys-53 contribute to the ATP site; that span reads IGHGSFGAV. Catalysis depends on Asp-147, which acts as the Proton acceptor. Disordered stretches follow at residues 316–375 and 405–424; these read TRNG…DESS and DEAG…SVQS. Ser-324 carries the phosphoserine; by ATM modification. Phosphoserine occurs at positions 343, 346, and 349. Positions 349-366 are enriched in low complexity; the sequence is SIPSTSVSTGSRSSSVNS. Thr-357 is subject to Phosphothreonine. Ser-359 carries the phosphoserine modification. Residues 405–416 are compositionally biased toward basic and acidic residues; sequence DEAGHGDPRPEP. Ser-442 carries the phosphoserine modification. Coiled-coil stretches lie at residues 452–502, 548–649, and 754–871; these read EQEN…THAN, FLES…HAML, and LKTL…QERE. The disordered stretch occupies residues 565–596; sequence EEMNEDHSTPKKEKQERISKHKENLQHTQAEE. The residue at position 830 (Lys-830) is an N6-acetyllysine.

The protein belongs to the protein kinase superfamily. STE Ser/Thr protein kinase family. STE20 subfamily. In terms of assembly, self-associates. Interacts with ERN1 and TRAF2. Interaction with TRAF2 is facilitated under ER stress conditions, such as treatment with tunicamycin, and may promote TRAF2 phosphorylation. Interacts (via N-terminus) with STK25; the interaction promotes STK25 abundance at the level of protein expression and/or stability. Post-translationally, autophosphorylated. Phosphorylation at Ser-324 by ATM following DNA damage is required for activation of the p38/MAPK14 stress-activated MAPK cascade. Phosphorylated at Ser-324 and on Tyr residues during T cell activation. Phosphorylated by LRRK2.

It localises to the cytoplasm. It is found in the cell membrane. The protein localises to the membrane raft. The protein resides in the lipid droplet. The catalysed reaction is L-seryl-[protein] + ATP = O-phospho-L-seryl-[protein] + ADP + H(+). It carries out the reaction L-threonyl-[protein] + ATP = O-phospho-L-threonyl-[protein] + ADP + H(+). Functionally, serine/threonine-protein kinase that acts as a regulator of the p38/MAPK14 stress-activated MAPK cascade and of the MAPK8/JNK cascade. In response to DNA damage, involved in the G2/M transition DNA damage checkpoint by activating the p38/MAPK14 stress-activated MAPK cascade, probably by mediating phosphorylation of upstream MAP2K3 and MAP2K6 kinases. Inhibits basal activity of the MAPK8/JNK cascade and diminishes its activation in response to epidermal growth factor (EGF). Positively regulates canonical T cell receptor (TCR) signaling by preventing early PTPN6/SHP1-mediated inactivation of LCK, ensuring sustained TCR signaling that is required for optimal activation and differentiation of T cells. Phosphorylates PTPN6/SHP1 on 'Thr-394', leading to its polyubiquitination and subsequent proteasomal degradation. Required for cell surface expression of metalloprotease ADAM10 on type 1 transitional B cells which is necessary for their NOTCH-mediated development into marginal zone B cells. Also required for the NOTCH-mediated terminal differentiation of splenic conventional type 2 dendritic cells. Positively regulates osteoblast differentiation by acting as an upstream activator of the JNK pathway. Promotes JNK signaling in hepatocytes and positively regulates hepatocyte lipid storage by inhibiting beta-oxidation and triacylglycerol secretion while enhancing lipid synthesis. Restricts age-associated inflammation by negatively regulating differentiation of macrophages and their production of pro-inflammatory cytokines. Plays a role in negatively regulating the abundance of regulatory T cells in white adipose tissue. The sequence is that of Serine/threonine-protein kinase TAO3 (Taok3) from Mus musculus (Mouse).